The sequence spans 43 residues: Protein PsbN (43 aa).

A helical transmembrane segment spans residues 5–27 (TLVAISISGLLVSFTGYALYTAF).

The protein belongs to the PsbN family.

It is found in the plastid. Its subcellular location is the chloroplast thylakoid membrane. In terms of biological role, may play a role in photosystem I and II biogenesis. This is Protein PsbN from Coelogyne cristata (Orchid).